The following is a 602-amino-acid chain: Pro-neuregulin-1, membrane-bound isoform (602 aa).

The Extracellular segment spans residues 1–206; sequence MWATSEGPLQ…MEAEELYQKR (206 aa). N21 carries an N-linked (GlcNAc...) asparagine glycan. Positions 29-123 constitute an Ig-like C2-type domain; it reads PKLKEMKNQE…DSTKASVIIT (95 aa). Residues C49 and C105 are joined by a disulfide bond. Residues N113 and N126 are each glycosylated (N-linked (GlcNAc...) asparagine). The EGF-like domain occupies 137–181; it reads HLTKCDIKQKAFCVNGGECYMVKDLPNPPRYLCRCPNEFTGDRCQ. Disulfide bonds link C141–C155, C149–C169, and C171–C180. The helical transmembrane segment at 207-229 threads the bilayer; it reads VLTITGICIALLVVGIMCVVAYC. The Cytoplasmic segment spans residues 230–602; the sequence is KTKKQRKKLH…VIANQDPIAV (373 aa). 4 disordered regions span residues 293–366, 391–421, 460–479, and 486–553; these read ETSF…EGNS, MTTP…PVSS, FNSF…PSPL, and EYET…FLSI. The span at 294–314 shows a compositional bias: low complexity; sequence TSFSTSHYTSTTHHSMTVTQT. A compositionally biased stretch (polar residues) spans 315–324; it reads PSHSWSNGHT. The span at 325–341 shows a compositional bias: low complexity; it reads ESILSESHSVLVSSSVE. The segment covering 460-474 has biased composition (polar residues); it reads FNSFHNNPTHESNSL. The segment covering 504–514 has biased composition (basic residues); the sequence is TNSRRVKRTKP. Low complexity predominate over residues 527 to 536; that stretch reads DTSSQSTSSE.

It belongs to the neuregulin family. Proteolytic cleavage close to the plasma membrane on the external face leads to the release of the soluble growth factor form. Post-translationally, extensive glycosylation precedes the proteolytic cleavage.

The protein resides in the cell membrane. It localises to the secreted. In terms of biological role, direct ligand for the ERBB tyrosine kinase receptors. The multiple isoforms perform diverse functions: cysteine-rich domain containing isoforms (isoform 2-isoform 4) probably regulate the expression of nicotinic acetylcholine receptors at developing interneuronal synapses. Isoform Ig-NRG is required for the initial induction and/or maintenance of the mature levels of acetylcholine receptors at neuromuscular synapses. Binds to ERBB3 and integrins to form a complex which is essential for NRG1-ERBB signaling. In Gallus gallus (Chicken), this protein is Pro-neuregulin-1, membrane-bound isoform (NRG1).